Reading from the N-terminus, the 308-residue chain is ADP-L-glycero-D-manno-heptose-6-epimerase (308 aa).

NADP(+) is bound by residues 10-11 (MI), 31-32 (DN), lysine 38, lysine 53, 75-79 (EGACS), and asparagine 92. Tyrosine 140 functions as the Proton acceptor in the catalytic mechanism. Lysine 144 contacts NADP(+). Position 169 (asparagine 169) interacts with substrate. Residues valine 170 and lysine 178 each coordinate NADP(+). Lysine 178 functions as the Proton acceptor in the catalytic mechanism. Substrate-binding positions include serine 180, histidine 187, 201–204 (FEGS), arginine 209, and tyrosine 272.

This sequence belongs to the NAD(P)-dependent epimerase/dehydratase family. HldD subfamily. In terms of assembly, homopentamer. The cofactor is NADP(+).

The catalysed reaction is ADP-D-glycero-beta-D-manno-heptose = ADP-L-glycero-beta-D-manno-heptose. Its pathway is nucleotide-sugar biosynthesis; ADP-L-glycero-beta-D-manno-heptose biosynthesis; ADP-L-glycero-beta-D-manno-heptose from D-glycero-beta-D-manno-heptose 7-phosphate: step 4/4. Catalyzes the interconversion between ADP-D-glycero-beta-D-manno-heptose and ADP-L-glycero-beta-D-manno-heptose via an epimerization at carbon 6 of the heptose. In Actinobacillus pleuropneumoniae serotype 5b (strain L20), this protein is ADP-L-glycero-D-manno-heptose-6-epimerase.